The sequence spans 393 residues: uncharacterized protein (393 aa).

Residues 2 to 266 (AMIGLVGKPN…AEKAGIIKRK (265 aa)) enclose the OBG-type G domain. Residues 8–15 (GKPNVGKS) and 78–82 (DVAGL) each bind GTP. Residues 314–390 (DMIVVYPVED…KHNDIIKIVS (77 aa)) form the TGS domain.

It belongs to the TRAFAC class OBG-HflX-like GTPase superfamily. OBG GTPase family.

This is an uncharacterized protein from Methanocaldococcus jannaschii (strain ATCC 43067 / DSM 2661 / JAL-1 / JCM 10045 / NBRC 100440) (Methanococcus jannaschii).